The primary structure comprises 274 residues: MTLQEEIIRQLGVKASIDPKEEIRKTVDFLKAYLRKHSFLKTYVLGISGGQDSTLAGKLAQMAIAELREETGDQAYQFIAVRLPYGVQADEADAQKALAFIAPDQTLTINIKAAVDGQVEALQAAGVEISDFNKGNIKARQRMISQYAIAGQMAGAVIGTDHAAENITGFFTKFGDGGADILPLFRLNKRQGKALLKVLGADAALYEKVPTADLEDQKPGLADEVALGVTYQDIDDYLEGKLISKVAQATIEKWWHKGQHKRHLPITIFDDFWK.

G46–S53 contacts ATP. A Mg(2+)-binding site is contributed by D52. R140 provides a ligand contact to deamido-NAD(+). T160 provides a ligand contact to ATP. E165 contacts Mg(2+). Positions 173 and 180 each coordinate deamido-NAD(+). ATP contacts are provided by K189 and T211. Position 260–261 (H260–K261) interacts with deamido-NAD(+).

This sequence belongs to the NAD synthetase family. In terms of assembly, homodimer.

The enzyme catalyses deamido-NAD(+) + NH4(+) + ATP = AMP + diphosphate + NAD(+) + H(+). The protein operates within cofactor biosynthesis; NAD(+) biosynthesis; NAD(+) from deamido-NAD(+) (ammonia route): step 1/1. In terms of biological role, catalyzes the ATP-dependent amidation of deamido-NAD to form NAD. Uses ammonia as a nitrogen source. The protein is NH(3)-dependent NAD(+) synthetase of Streptococcus pyogenes serotype M6 (strain ATCC BAA-946 / MGAS10394).